The primary structure comprises 443 residues: L-ornithine N(5)-monooxygenase (443 aa).

FAD contacts are provided by residues 45–53 (DKQGDYRWH) and Gln-64. Lys-69 is a substrate binding site. Residue Val-130 participates in FAD binding. NADP(+) contacts are provided by residues 215–218 (GGQS) and Arg-240. Substrate contacts are provided by residues 254-257 (NEVF) and Asn-284. 284–286 (NYS) serves as a coordination point for NADP(+). Residue 407 to 409 (TLL) coordinates FAD. Ser-410 provides a ligand contact to substrate.

This sequence belongs to the lysine N(6)-hydroxylase/L-ornithine N(5)-oxygenase family. As to quaternary structure, homotetramer. FAD serves as cofactor.

It is found in the cell inner membrane. It carries out the reaction L-ornithine + NADPH + O2 = N(5)-hydroxy-L-ornithine + NADP(+) + H2O. It participates in siderophore biosynthesis; pyoverdin biosynthesis. Its function is as follows. Catalyzes the conversion of L-ornithine to N(5)-hydroxyornithine, the first step in the biosynthesis of all hydroxamate-containing siderophores, such as pyoverdin. Pyoverdin is a hydroxamate siderophore composed of a 6,7-dihydroxyquinoline-containing fluorescent chromophore joined to the N-terminus of a partly cyclic octapeptide (D-Ser-L-Arg-D-Ser-L-N(5)-OH-Orn-L-Lys-L-N(5)-OH-Orn-L-Thr-L-Thr in strain PAO1). Specific for NADPH, which plays a role in stabilization of the C4a-hydroperoxyflavin intermediate. The protein is L-ornithine N(5)-monooxygenase of Pseudomonas aeruginosa (strain ATCC 15692 / DSM 22644 / CIP 104116 / JCM 14847 / LMG 12228 / 1C / PRS 101 / PAO1).